Consider the following 576-residue polypeptide: Glucoamylase ARB_02327-1 (576 aa).

Positions Met1–Ala20 are cleaved as a signal peptide. Trp141 contributes to the substrate binding site. N-linked (GlcNAc...) asparagine glycosylation is found at Asn168 and Asn192. Asp197 functions as the Proton acceptor in the catalytic mechanism. Glu200 functions as the Proton donor in the catalytic mechanism. 2 cysteine pairs are disulfide-bonded: Cys243–Cys470 and Cys285–Cys293. A CBM20 domain is found at Gly477 to Arg576. Residues Thr552 to Arg576 are disordered. Residues Asn558 and Asn572 are each glycosylated (N-linked (GlcNAc...) asparagine).

The protein belongs to the glycosyl hydrolase 15 family.

Its subcellular location is the secreted. The catalysed reaction is Hydrolysis of terminal (1-&gt;4)-linked alpha-D-glucose residues successively from non-reducing ends of the chains with release of beta-D-glucose.. This chain is Glucoamylase ARB_02327-1, found in Schizophyllum commune (strain H4-8 / FGSC 9210) (Split gill fungus).